The chain runs to 583 residues: Protein cps3 (583 aa).

C3H1-type zinc fingers lie at residues 35-62 (SLQH…HDLE) and 64-91 (ATEK…HVLP). Disordered stretches follow at residues 318–346 (LGRP…NGST), 471–490 (KVSS…YNGT), and 504–532 (RQES…KNLG). Polar residues-rich tracts occupy residues 323 to 334 (KSPSVPTSVGSN), 475 to 490 (NLNS…YNGT), and 513 to 532 (PSLN…KNLG).

The protein localises to the cytoplasm. Responsible for supersensitivity to the spindle poison, isopropyl N-3-chlorophenyl carbamate. Has a role in meiosis. The polypeptide is Protein cps3 (cps3) (Schizosaccharomyces pombe (strain 972 / ATCC 24843) (Fission yeast)).